A 105-amino-acid chain; its full sequence is UPF0145 protein Sala_0338 (105 aa).

Belongs to the UPF0145 family.

This chain is UPF0145 protein Sala_0338, found in Sphingopyxis alaskensis (strain DSM 13593 / LMG 18877 / RB2256) (Sphingomonas alaskensis).